The primary structure comprises 1382 residues: Hepatocyte growth factor receptor (1382 aa).

Residues 1–24 (MKSPAVLAPGILVFLFTFVQKSDG) form the signal peptide. Residues 25–933 (ECKEALVKSR…VIVQPDQNFT (909 aa)) are Extracellular-facing. The Sema domain occupies 27 to 516 (KEALVKSRMN…TGKKITKIPL (490 aa)). N-linked (GlcNAc...) asparagine glycosylation occurs at N45. 4 cysteine pairs are disulfide-bonded: C95-C101, C98-C160, C133-C141, and C173-C176. N106 carries an N-linked (GlcNAc...) asparagine glycan. N149 carries N-linked (GlcNAc...) asparagine glycosylation. N-linked (GlcNAc...) asparagine glycosylation is found at N203 and N359. 2 cysteine pairs are disulfide-bonded: C299-C364 and C386-C398. N-linked (GlcNAc...) asparagine glycans are attached at residues N400 and N406. 4 disulfide bridges follow: C521–C539, C527–C562, C530–C546, and C542–C552. IPT/TIG domains follow at residues 564-656 (PAIY…FSYV), 658-740 (PIIT…FIYR), and 743-837 (PIVY…LIYV). The O-linked (Man) threonine glycan is linked to T583. N-linked (GlcNAc...) asparagine glycans are attached at residues N608 and N636. 2 O-linked (Man) threonine glycosylation sites follow: T677 and T762. N786, N880, and N931 each carry an N-linked (GlcNAc...) asparagine glycan. A helical transmembrane segment spans residues 934-956 (GLIVGVVSISIILLLLLGLFLWL). The Cytoplasmic segment spans residues 957-1382 (KKRKQIKDLG…QDNVNGEGDT (426 aa)). S967 is subject to Phosphoserine. Residue T978 is modified to Phosphothreonine. Phosphoserine is present on residues S991, S998, and S1001. Phosphotyrosine is present on Y1004. The Protein kinase domain maps to 1079–1346 (VHFNEVIGRG…RISAIFSTFI (268 aa)). ATP is bound by residues 1085 to 1093 (IGRGHFGCV) and K1111. The active-site Proton acceptor is the D1205. The interaction with RANBP9 stretch occupies residues 1213-1382 (LDEKFTVKVA…QDNVNGEGDT (170 aa)). Position 1231 is a phosphotyrosine (Y1231). Y1235 and Y1236 each carry phosphotyrosine; by autocatalysis. A Phosphothreonine modification is found at T1290. Residues 1321–1360 (WHPKAELRPSFSELVSRISAIFSTFIGEHYVHVNATYVNV) are interaction with MUC20. 2 positions are modified to phosphotyrosine; by autocatalysis: Y1350 and Y1357. Residue Y1366 is modified to Phosphotyrosine.

The protein belongs to the protein kinase superfamily. Tyr protein kinase family. Heterodimer made of an alpha chain (50 kDa) and a beta chain (145 kDa) which are disulfide linked. Binds PLXNB1. Interacts when phosphorylated with downstream effectors including STAT3, PIK3R1, SRC, PCLG1, GRB2 and GAB1. Interacts with SPSB1, SPSB2 and SPSB4. Interacts with INPP5D/SHIP1. When phosphorylated at Tyr-1357, interacts with INPPL1/SHIP2. Interacts with RANBP9 and RANBP10, as well as SPSB1, SPSB2, SPSB3 and SPSB4. SPSB1 binding occurs in the presence and in the absence of HGF, however HGF treatment has a positive effect on this interaction. Interacts with MUC20; prevents interaction with GRB2 and suppresses hepatocyte growth factor-induced cell proliferation. Interacts with GRB10. Interacts with PTPN1 and PTPN2. Interacts with HSP90AA1 and HSP90AB1; the interaction suppresses MET kinase activity. Interacts with tensin TNS3. Interacts (when phosphorylated) with tensin TNS4 (via SH2 domain); the interaction increases MET protein stability by inhibiting MET endocytosis and subsequent lysosomal degradation. In terms of processing, autophosphorylated in response to ligand binding on Tyr-1235 and Tyr-1236 in the kinase domain leading to further phosphorylation of Tyr-1350 and Tyr-1357 in the C-terminal multifunctional docking site. Dephosphorylated by PTPRJ at Tyr-1350 and Tyr-1366. Dephosphorylated by PTPN1 and PTPN2. Ubiquitinated. Ubiquitination by CBL regulates the receptor stability and activity through proteasomal degradation. Post-translationally, O-mannosylation of IPT/TIG domains by TMEM260 is required for protein maturation. O-mannosylated residues are composed of single mannose glycans that are not elongated or modified.

The protein resides in the membrane. The catalysed reaction is L-tyrosyl-[protein] + ATP = O-phospho-L-tyrosyl-[protein] + ADP + H(+). With respect to regulation, in its inactive state, the C-terminal tail interacts with the catalytic domain and inhibits the kinase activity. Upon ligand binding, the C-terminal tail is displaced and becomes phosphorylated, thus increasing the kinase activity. In terms of biological role, receptor tyrosine kinase that transduces signals from the extracellular matrix into the cytoplasm by binding to hepatocyte growth factor/HGF ligand. Regulates many physiological processes including proliferation, scattering, morphogenesis and survival. Ligand binding at the cell surface induces autophosphorylation of MET on its intracellular domain that provides docking sites for downstream signaling molecules. Following activation by ligand, interacts with the PI3-kinase subunit PIK3R1, PLCG1, SRC, GRB2, STAT3 or the adapter GAB1. Recruitment of these downstream effectors by MET leads to the activation of several signaling cascades including the RAS-ERK, PI3 kinase-AKT, or PLCgamma-PKC. The RAS-ERK activation is associated with the morphogenetic effects while PI3K/AKT coordinates prosurvival effects. During embryonic development, MET signaling plays a role in gastrulation, development and migration of muscles and neuronal precursors, angiogenesis and kidney formation. In adults, participates in wound healing as well as organ regeneration and tissue remodeling. Also promotes differentiation and proliferation of hematopoietic cells. This is Hepatocyte growth factor receptor (MET) from Muntiacus muntjak (Barking deer).